The chain runs to 43 residues: MEPATVLSIALAAVCIGVTGYSIYLSFGPPSKELADPFDDHED.

A helical membrane pass occupies residues leucine 7–proline 29.

The protein belongs to the PsbN family.

The protein resides in the cellular thylakoid membrane. In terms of biological role, may play a role in photosystem I and II biogenesis. The protein is Protein PsbN of Thermosynechococcus vestitus (strain NIES-2133 / IAM M-273 / BP-1).